Here is a 257-residue protein sequence, read N- to C-terminus: Imidazole glycerol phosphate synthase subunit HisF (257 aa).

Catalysis depends on residues aspartate 12 and aspartate 131.

Belongs to the HisA/HisF family. Heterodimer of HisH and HisF.

The protein resides in the cytoplasm. The catalysed reaction is 5-[(5-phospho-1-deoxy-D-ribulos-1-ylimino)methylamino]-1-(5-phospho-beta-D-ribosyl)imidazole-4-carboxamide + L-glutamine = D-erythro-1-(imidazol-4-yl)glycerol 3-phosphate + 5-amino-1-(5-phospho-beta-D-ribosyl)imidazole-4-carboxamide + L-glutamate + H(+). It participates in amino-acid biosynthesis; L-histidine biosynthesis; L-histidine from 5-phospho-alpha-D-ribose 1-diphosphate: step 5/9. Its function is as follows. IGPS catalyzes the conversion of PRFAR and glutamine to IGP, AICAR and glutamate. The HisF subunit catalyzes the cyclization activity that produces IGP and AICAR from PRFAR using the ammonia provided by the HisH subunit. This Burkholderia thailandensis (strain ATCC 700388 / DSM 13276 / CCUG 48851 / CIP 106301 / E264) protein is Imidazole glycerol phosphate synthase subunit HisF.